Reading from the N-terminus, the 306-residue chain is Curved DNA-binding protein (306 aa).

Residues 5–69 form the J domain; it reads DYYAIMGVKP…QRRAEYDQLW (65 aa).

The protein resides in the cytoplasm. It localises to the nucleoid. Its function is as follows. DNA-binding protein that preferentially recognizes a curved DNA sequence. It is probably a functional analog of DnaJ; displays overlapping activities with DnaJ, but functions under different conditions, probably acting as a molecular chaperone in an adaptive response to environmental stresses other than heat shock. Lacks autonomous chaperone activity; binds native substrates and targets them for recognition by DnaK. Its activity is inhibited by the binding of CbpM. The protein is Curved DNA-binding protein of Salmonella choleraesuis (strain SC-B67).